The following is a 220-amino-acid chain: MGQQSLIYSFVARGTVILAEYTEFKGNFTSVAAQCLQKLPSSNNKFTYNCDGHTFNYLADNGFTYCVVVIESAGRQIPMAFLERVKEDFNKRYGGGKASTAKANSLNKEFGSKLKEHMQYCADHPEEISKLSKVKAQVTEVKGVMMENIEKVLDRGEKIELLVDKTENLRSQAQDFRTQGTKMKRKLWFENMKIKLIVFGIIVALILIIILSVCHGFKCT.

Over 1 to 196 the chain is Cytoplasmic; it reads MGQQSLIYSF…LWFENMKIKL (196 aa). Residues 10-114 form the Longin domain; the sequence is FVARGTVILA…SLNKEFGSKL (105 aa). Residues 130-190 enclose the v-SNARE coiled-coil homology domain; that stretch reads KLSKVKAQVT…TKMKRKLWFE (61 aa). A helical; Anchor for type IV membrane protein transmembrane segment spans residues 197-217; sequence IVFGIIVALILIIILSVCHGF. The Vesicular segment spans residues 218–220; it reads KCT.

This sequence belongs to the synaptobrevin family. As to expression, expressed in flowers, leaves, stems and roots.

The protein localises to the cell membrane. It is found in the early endosome membrane. Functionally, involved in the targeting and/or fusion of transport vesicles to their target membrane. This is Putative vesicle-associated membrane protein 726 (VAMP726) from Arabidopsis thaliana (Mouse-ear cress).